Reading from the N-terminus, the 213-residue chain is Pyrrolidone-carboxylate peptidase (213 aa).

Catalysis depends on residues E81, C144, and H166.

Belongs to the peptidase C15 family. In terms of assembly, homodimer.

The protein localises to the cytoplasm. It catalyses the reaction Release of an N-terminal pyroglutamyl group from a polypeptide, the second amino acid generally not being Pro.. Removes 5-oxoproline from various penultimate amino acid residues except L-proline. This is Pyrrolidone-carboxylate peptidase (pcp) from Pseudomonas fluorescens.